The following is a 357-amino-acid chain: Nitronate monooxygenase npaC (357 aa).

FMN is bound by residues Gln167, Gly172, and Gly206.

The protein belongs to the nitronate monooxygenase family. NMO class I subfamily. It depends on FMN as a cofactor.

In terms of biological role, nitronate monooxygenase; part of the gene cluster that mediates the biosynthesis of the deadly neurotoxic nitroalkane 3-nitropropanoic acid (3-NPA) that acts as an antimetabolite of succinate and irreversibly inhibits succinate dehydrogenase and disrupts mitochondrial oxidative phosphorylation. Catalyzes the oxidation of 3-NPA to nitrite and malonic semialdehyde. NpaC is not conserved in all fungal npa clusters and, while it is possible that it serves as a self-protection mechanism against accumulation of 3-NPA (by npaA and npaB) in the producing host, the more likely scenario may be the three enzymes representing an alternative catabolic pathway of aspartate to generate readily metabolizable nitrogen and carbon sources. The polypeptide is Nitronate monooxygenase npaC (Metarhizium robertsii (strain ARSEF 23 / ATCC MYA-3075) (Metarhizium anisopliae (strain ARSEF 23))).